We begin with the raw amino-acid sequence, 149 residues long: UPF0178 protein VV1_1847 (149 aa).

The protein belongs to the UPF0178 family.

This chain is UPF0178 protein VV1_1847, found in Vibrio vulnificus (strain CMCP6).